A 251-amino-acid chain; its full sequence is 3-deoxy-manno-octulosonate cytidylyltransferase (251 aa).

This sequence belongs to the KdsB family.

Its subcellular location is the cytoplasm. It catalyses the reaction 3-deoxy-alpha-D-manno-oct-2-ulosonate + CTP = CMP-3-deoxy-beta-D-manno-octulosonate + diphosphate. It participates in nucleotide-sugar biosynthesis; CMP-3-deoxy-D-manno-octulosonate biosynthesis; CMP-3-deoxy-D-manno-octulosonate from 3-deoxy-D-manno-octulosonate and CTP: step 1/1. Its pathway is bacterial outer membrane biogenesis; lipopolysaccharide biosynthesis. Activates KDO (a required 8-carbon sugar) for incorporation into bacterial lipopolysaccharide in Gram-negative bacteria. This is 3-deoxy-manno-octulosonate cytidylyltransferase from Brucella abortus (strain 2308).